We begin with the raw amino-acid sequence, 518 residues long: ATP synthase subunit beta 2 (518 aa).

154-161 serves as a coordination point for ATP; sequence GGAGVGKT. The segment at 455–518 is disordered; it reads IDEAKGKAKP…TDHAADTHES (64 aa). 2 stretches are compositionally biased toward basic and acidic residues: residues 473-485 and 507-518; these read PDSK…DPKP and PETDHAADTHES.

The protein belongs to the ATPase alpha/beta chains family. In terms of assembly, F-type ATPases have 2 components, CF(1) - the catalytic core - and CF(0) - the membrane proton channel. CF(1) has five subunits: alpha(3), beta(3), gamma(1), delta(1), epsilon(1). CF(0) has three main subunits: a(1), b(2) and c(9-12). The alpha and beta chains form an alternating ring which encloses part of the gamma chain. CF(1) is attached to CF(0) by a central stalk formed by the gamma and epsilon chains, while a peripheral stalk is formed by the delta and b chains.

The protein localises to the cell inner membrane. The enzyme catalyses ATP + H2O + 4 H(+)(in) = ADP + phosphate + 5 H(+)(out). In terms of biological role, produces ATP from ADP in the presence of a proton gradient across the membrane. The catalytic sites are hosted primarily by the beta subunits. The sequence is that of ATP synthase subunit beta 2 from Albidiferax ferrireducens (strain ATCC BAA-621 / DSM 15236 / T118) (Rhodoferax ferrireducens).